The chain runs to 537 residues: MQETGVHNGAHGADKFGLKNLKGIYWNFGAPQLYEHALRNGEAVLSADGALVADTGVFTGRSPKDKFTVRDATTETTMWWGGNQSITAEQFETLYQDFIKHAEGMTLFAQDLYGGADPSFQIKTRVFTELAWHSLFIRTLLRRPDRADLAAFVPELTLIDLPSFRADPKRHGCRSENVVAIDFARKIVLIGGTQYAGEMKKSVFTTLNYYLPERGVLPMHCSANVGPAGDTAIFFGLSGTGKTTLSADPNRTLIGDDEHGWGKDGVFNFEGGCYAKCIKLSPEAEPEIFAASSRFGAVLENVVLDEITRKPDFDNGSKTENTRSAYPLESIPNASPTGRAGQPKNVVMLAADAFGVMPPIAKLTPAQAMYHFLSGYTAKVAGTERGVTEPTPEFSTCFGSPFLPRDPSVYGNMLRDLIHNHNVDCWLVNTGWTGGKYGTGHRMPIKVTRALLTAALDGSLRNAEFRTDPYFGFAVPTALPGVPSDILEPAKTWADKAEFDKTARALVGMFQKNFAKFEAQVDADVRAAAPDVKIAAE.

Substrate is bound by residues Arg-61, Tyr-195, and Lys-201. ATP-binding positions include Lys-201, His-220, and 236–244 (GLSGTGKTT). Mn(2+) contacts are provided by Lys-201 and His-220. Residue Asp-257 participates in Mn(2+) binding. Glu-285 is an ATP binding site. The segment covering 311 to 321 (PDFDNGSKTEN) has biased composition (basic and acidic residues). Residues 311-342 (PDFDNGSKTENTRSAYPLESIPNASPTGRAGQ) form a disordered region. Arg-323 lines the substrate pocket. Residues Arg-323 and Thr-448 each coordinate ATP.

It belongs to the phosphoenolpyruvate carboxykinase (ATP) family. Requires Mn(2+) as cofactor.

It localises to the cytoplasm. The catalysed reaction is oxaloacetate + ATP = phosphoenolpyruvate + ADP + CO2. Its pathway is carbohydrate biosynthesis; gluconeogenesis. Its function is as follows. Involved in the gluconeogenesis. Catalyzes the conversion of oxaloacetate (OAA) to phosphoenolpyruvate (PEP) through direct phosphoryl transfer between the nucleoside triphosphate and OAA. The sequence is that of Phosphoenolpyruvate carboxykinase (ATP) from Rhodopseudomonas palustris (strain BisB5).